A 203-amino-acid polypeptide reads, in one-letter code: VEL1-related protein SPBPB2B2.15 (203 aa).

The N-terminal stretch at 1 to 16 (MFKNLIFLFFIGLATA) is a signal peptide.

This sequence belongs to the VEL1 family.

It localises to the cytoplasm. The protein resides in the cytosol. The sequence is that of VEL1-related protein SPBPB2B2.15 from Schizosaccharomyces pombe (strain 972 / ATCC 24843) (Fission yeast).